Here is a 371-residue protein sequence, read N- to C-terminus: Putative glutamate--cysteine ligase 2 (371 aa).

This sequence belongs to the glutamate--cysteine ligase type 2 family. YbdK subfamily.

The enzyme catalyses L-cysteine + L-glutamate + ATP = gamma-L-glutamyl-L-cysteine + ADP + phosphate + H(+). Functionally, ATP-dependent carboxylate-amine ligase which exhibits weak glutamate--cysteine ligase activity. The chain is Putative glutamate--cysteine ligase 2 from Burkholderia thailandensis (strain ATCC 700388 / DSM 13276 / CCUG 48851 / CIP 106301 / E264).